Consider the following 447-residue polypeptide: Tubulin beta chain (447 aa).

Residues Q11, E69, S138, G142, T143, G144, N204, and N226 each coordinate GTP. E69 contacts Mg(2+). The tract at residues 424–447 (QYQEASVSEGEEEYDEEAPLEAEE) is disordered. Residues 432-447 (EGEEEYDEEAPLEAEE) are compositionally biased toward acidic residues.

The protein belongs to the tubulin family. In terms of assembly, dimer of alpha and beta chains. A typical microtubule is a hollow water-filled tube with an outer diameter of 25 nm and an inner diameter of 15 nM. Alpha-beta heterodimers associate head-to-tail to form protofilaments running lengthwise along the microtubule wall with the beta-tubulin subunit facing the microtubule plus end conferring a structural polarity. Microtubules usually have 13 protofilaments but different protofilament numbers can be found in some organisms and specialized cells. Requires Mg(2+) as cofactor.

It localises to the cytoplasm. Its subcellular location is the cytoskeleton. In terms of biological role, tubulin is the major constituent of microtubules, a cylinder consisting of laterally associated linear protofilaments composed of alpha- and beta-tubulin heterodimers. Microtubules grow by the addition of GTP-tubulin dimers to the microtubule end, where a stabilizing cap forms. Below the cap, tubulin dimers are in GDP-bound state, owing to GTPase activity of alpha-tubulin. This is Tubulin beta chain (TUB1) from Cochliobolus heterostrophus (Southern corn leaf blight fungus).